We begin with the raw amino-acid sequence, 257 residues long: Phycoerythrobilin:ferredoxin oxidoreductase (257 aa).

This sequence belongs to the HY2 family.

It carries out the reaction (3Z)-phycoerythrobilin + oxidized 2[4Fe-4S]-[ferredoxin] = 15,16-dihydrobiliverdin + reduced 2[4Fe-4S]-[ferredoxin] + 2 H(+). Catalyzes the two-electron reduction of the C2 and C3(1) diene system of 15,16-dihydrobiliverdin. This Prochlorococcus marinus (strain SARG / CCMP1375 / SS120) protein is Phycoerythrobilin:ferredoxin oxidoreductase (pebB).